The sequence spans 198 residues: NAD(P)H dehydrogenase (quinone) (198 aa).

The Flavodoxin-like domain occupies I4 to V189. FMN is bound by residues S10–I15 and T78–F80. NAD(+) is bound at residue Y12. Substrate is bound at residue W98. FMN-binding positions include S113–G118 and H133.

The protein belongs to the WrbA family. It depends on FMN as a cofactor.

It carries out the reaction a quinone + NADH + H(+) = a quinol + NAD(+). It catalyses the reaction a quinone + NADPH + H(+) = a quinol + NADP(+). This chain is NAD(P)H dehydrogenase (quinone), found in Salmonella paratyphi C (strain RKS4594).